The following is a 1066-amino-acid chain: MTSQEKVPFQVQLSLPQILSRRDWENPQITQYHRLEAHPPFHSWRDVESAQKDRPSPQQQTLNGLWSFSYFTQPEAVPEHWVRCDLAEAKPLPVPANWQLHGYDAPIYTNIQYPIPVNPPRVPDLNPTGCYSRDFTLEPSWLASGKTRIIFDGVSSAFYLWCNGQWVGYSQDSRLPAEFDLTPYLQAGSNRIAVLVLRWSDGSYLEDQDMWRMSGIFRDVKLLHKPEIHLRDIHIMTHLSPEFTSANLEVMAAVNIPSLQLNDPQVTGSYQLRVQLWLADKLVASLQQPLGTQAIDERGPYTDRTQLVLRIDQPLLWSAEQPTLYRAVVSLLNHQQELIEAEAYDVGFRQVAIHQGLLKINGKAVLIRGVNRHEHHPQTGQAIDEESLLQDILLMKQHNFNAVRCSHYPNHPLWYRLCDRYGLYVVDEANIETHGMQPMSRLSDDPSWFSAFSERVTRMVQRDRNHPCIIIWSLGNESGHGATHDALYRWIKTNDPTRPVQYEGGGANTLATDILCPMYARVDEDQPFPAVPKWSIKKWIGLPNESRPLILCEYAHAMGNSFGGFARYWQAFRQYPRLQGGFIWDWVDQSLTHHNDHGQPYWAYGGDFGDTPNDRQFCMNGLVFPDRSPHPSLYEAQCAQQFFQFSLLSTTPLVINITSEYLFRESDNEQLYWRIMLEGESVLEGSQPLNLSPESSQCYRLAEKLPTLNKPGQLWLNVEIRQPKETPWSPAQHRSAWHQWRLPQPLFSPSSDLTNATAHYAPQLQHNLQLQHNRQLQHDLQLQQDEQHIKVTYQQQCWQFSRQTGRLDQWWVADKPMLLRPLQDQFVRAPLDNDIGISEATHIDPNAWVERWKKAGMYQLQQRCLSLHVDHLSHSVQISAEYGYEFEQEPLLHSHWVYRFDRHGRMTIDVNVRIATSLPAPARIGMCCQLADISPTVEWLGLGPHENYPDRQLAAQYGHWSLPLEQMHTAYIFPSENGLRCNTHTLNYGRWTLTGDFHFGISRYSTQQLMVTSHQHLLEPEEGTWLNIDGFHMGVGGDDSWSPSVHIDDILTRETYQYQICWQYKV.

Positions 110 and 209 each coordinate substrate. Residue aspartate 209 coordinates Na(+). 3 residues coordinate Mg(2+): glutamate 432, histidine 434, and glutamate 477. Substrate is bound by residues glutamate 477 and 553 to 556 (EYAH). The active-site Proton donor is glutamate 477. The active-site Nucleophile is the glutamate 553. Asparagine 613 contacts Mg(2+). The Na(+) site is built by phenylalanine 617 and asparagine 620. Residues asparagine 620 and tryptophan 1041 each contribute to the substrate site.

Belongs to the glycosyl hydrolase 2 family. As to quaternary structure, homotetramer. Mg(2+) serves as cofactor. Na(+) is required as a cofactor.

The catalysed reaction is Hydrolysis of terminal non-reducing beta-D-galactose residues in beta-D-galactosides.. This Yersinia pseudotuberculosis serotype IB (strain PB1/+) protein is Beta-galactosidase.